The chain runs to 662 residues: Cytochrome bo(3) ubiquinol oxidase subunit 1 (662 aa).

At 1–14 (MFGKLTFDAIPYHE) the chain is on the extracellular side. A helical membrane pass occupies residues 15–35 (PIIMITYIAIILIALCIASTI). At 36–58 (TYYKKWKYLWYEWFTTVDHKKIS) the chain is on the cytoplasmic side. A helical transmembrane segment spans residues 59-79 (IMYGILAFVMLFRGFVDAILM). A ubiquinone contacts are provided by R71, D75, and H98. The Extracellular segment spans residues 80-106 (RTQQVVASAGFKGFLPPHHYDQIFTAH). H106 provides a ligand contact to heme b. The helical transmembrane segment at 107–127 (GVIMIFFVAMPLVIGLMNLVI) threads the bilayer. Residues 128 to 145 (PLQIGARDVAFPFLNNLS) are Cytoplasmic-facing. The helical transmembrane segment at 146–166 (FWLNVSSAVLLTLSLGIGEFA) threads the bilayer. At 167-189 (QTGWLAYPPLSGIKYSSGVGVDY) the chain is on the extracellular side. W170 provides a ligand contact to heme b. The helical transmembrane segment at 190–210 (WIWSLQISGVGTTLTGINFLV) threads the bilayer. The Cytoplasmic segment spans residues 211–232 (TILKMRAPGMSFFKMPVFTWTS). The helical transmembrane segment at 233–253 (LCTNILIVISFPVLTVTLVLL) threads the bilayer. Residues 254 to 277 (TLDRYFNFHFFTNDLGGNAMMYVN) lie on the Extracellular side of the membrane. The helical transmembrane segment at 278 to 298 (LIWIWGHPEVYILVLPVFGVF) threads the bilayer. Residue H284 participates in Cu(2+) binding. Residues 284 to 288 (HPEVY) constitute a cross-link (1'-histidyl-3'-tyrosine (His-Tyr)). A Fe(II)-heme o-binding site is contributed by Y288. Over 299-309 (SEVVATFSKKR) the chain is Cytoplasmic. A helical membrane pass occupies residues 310–330 (LFGYVSLVWATLSITILSFIV). Over 331-346 (WLHHFFTMGAGADVNT) the chain is Extracellular. Cu(2+)-binding residues include H333 and H334. The chain crosses the membrane as a helical span at residues 347–367 (FFGITTMIIAIPTGVKIFNWL). The Cytoplasmic portion of the chain corresponds to 368 to 380 (FTIYQGRVHMHSS). The chain crosses the membrane as a helical span at residues 381-401 (ILWTLGFLVTFSIGGMTGVLL). The Extracellular portion of the chain corresponds to 402–413 (SVPPADFVLHNS). Residues H411 and H419 each coordinate Fe(II)-heme o. A helical transmembrane segment spans residues 414 to 434 (LFLVAHFHNVIIGGVVFGCFA). Residue H421 participates in heme b binding. Residues 435–456 (GINYWFPKLFGFVLNEIWGKRA) are Cytoplasmic-facing. Residues 457 to 477 (FWFWIIGFFLAFIPLYFLGLM) form a helical membrane-spanning segment. Over 478 to 493 (GMTRRLSQNIDSEFHM) the chain is Extracellular. Positions 481 and 482 each coordinate heme b. A helical membrane pass occupies residues 494–514 (LLCIAAIGACFIGIGIICQVI). The Cytoplasmic segment spans residues 515 to 586 (QFFISIKERR…INSINYHDIH (72 aa)). The helical transmembrane segment at 587–607 (MPKNTGLGFMISIFSLFFGFS) threads the bilayer. A topological domain (extracellular) is located at residue A608. A helical transmembrane segment spans residues 609 to 629 (VWHITWLCILSFLAIIISLFI). Topologically, residues 630 to 662 (NSLNEDTEYTISAEEIKKIEHQYWKNIQKAGLK) are cytoplasmic.

Belongs to the heme-copper respiratory oxidase family. In terms of assembly, the cytochrome bo(3) ubiquinol oxidase complex is a heterooctamer of two A chains, two B chains, two C chains and two D chains. The cofactor is Cu(2+). It depends on heme b as a cofactor. Requires Fe(II)-heme o as cofactor.

It localises to the cell membrane. It carries out the reaction 2 a ubiquinol + O2 + n H(+)(in) = 2 a ubiquinone + 2 H2O + n H(+)(out). In terms of biological role, cytochrome bo(3) ubiquinol oxidase is the terminal enzyme in the aerobic respiratory chain. Catalyzes the four-electron reduction of O2 to water, using a ubiquinol as a membrane soluble electron donor for molecular oxygen reduction. Has proton pump activity across the membrane in addition to electron transfer, pumping 2 protons/electron and generating a proton motive force. All the redox centers of this enzyme complex are located within the largest subunit, subunit I. Protons are probably pumped via D- and K- channels found in this subunit. The polypeptide is Cytochrome bo(3) ubiquinol oxidase subunit 1 (cyoB) (Buchnera aphidicola subsp. Acyrthosiphon pisum (strain APS) (Acyrthosiphon pisum symbiotic bacterium)).